Consider the following 173-residue polypeptide: MHCPFCQHADTRVIDSRVSEDGATIRRRRECEACGERFSTMETVELKLPAIVKSDGTREAFDQRKVRAGFDRALQKRAVAEDKIEAAVRAVVHQLRISGEREVPSIKVGEFVMNELRKLDHVGYVRFASVYRSFEDVADFREEIEKLERDLPSSTEQLQLLGDVIALTKKKKG.

The segment at Cys3–Cys34 is a zinc-finger region. One can recognise an ATP-cone domain in the interval Pro49–Asp139.

It belongs to the NrdR family. Requires Zn(2+) as cofactor.

In terms of biological role, negatively regulates transcription of bacterial ribonucleotide reductase nrd genes and operons by binding to NrdR-boxes. In Stenotrophomonas maltophilia (strain R551-3), this protein is Transcriptional repressor NrdR.